A 244-amino-acid chain; its full sequence is Thaumatin-like protein 1 (244 aa).

Residues 1–22 (MKFEALIGLVLVFLSEHAGVYS) form the signal peptide. 8 cysteine pairs are disulfide-bonded: cysteine 31-cysteine 243, cysteine 79-cysteine 89, cysteine 94-cysteine 101, cysteine 149-cysteine 232, cysteine 154-cysteine 215, cysteine 162-cysteine 178, cysteine 182-cysteine 191, and cysteine 192-cysteine 202. Asparagine 150 carries N-linked (GlcNAc...) asparagine glycosylation.

The protein belongs to the thaumatin family. In terms of processing, N-glycosylated. In terms of tissue distribution, style.

The protein resides in the secreted. This Pyrus pyrifolia (Chinese pear) protein is Thaumatin-like protein 1 (TL1).